We begin with the raw amino-acid sequence, 303 residues long: GTP cyclohydrolase FolE2 (303 aa).

The protein belongs to the GTP cyclohydrolase IV family.

It catalyses the reaction GTP + H2O = 7,8-dihydroneopterin 3'-triphosphate + formate + H(+). It participates in cofactor biosynthesis; 7,8-dihydroneopterin triphosphate biosynthesis; 7,8-dihydroneopterin triphosphate from GTP: step 1/1. In terms of biological role, converts GTP to 7,8-dihydroneopterin triphosphate. This Exiguobacterium sp. (strain ATCC BAA-1283 / AT1b) protein is GTP cyclohydrolase FolE2.